Reading from the N-terminus, the 857-residue chain is Protein STICHEL-like 2 (857 aa).

Position 280 to 287 (280 to 287 (GPRGTGKT)) interacts with ATP. 4 residues coordinate Zn(2+): C299, C309, C312, and C315. Residues 544–576 (LTRHTSEEEMQKLRNALKILSDAEKHLRASKNQ) adopt a coiled-coil conformation. Disordered stretches follow at residues 593–629 (SSFA…DAEK) and 787–845 (ASSR…SSRL). Over residues 599–610 (ENGRNQINKDVE) the composition is skewed to basic and acidic residues. A compositionally biased stretch (polar residues) spans 834–843 (QSETQNSKSS).

The protein belongs to the DnaX/STICHEL family.

In Arabidopsis thaliana (Mouse-ear cress), this protein is Protein STICHEL-like 2.